Consider the following 263-residue polypeptide: Glucosamine-6-phosphate deaminase (263 aa).

Aspartate 67 serves as the catalytic Proton acceptor; for enolization step. The active-site For ring-opening step is the asparagine 136. The active-site Proton acceptor; for ring-opening step is histidine 138. Glutamate 143 functions as the For ring-opening step in the catalytic mechanism.

Belongs to the glucosamine/galactosamine-6-phosphate isomerase family. NagB subfamily. Homohexamer.

It catalyses the reaction alpha-D-glucosamine 6-phosphate + H2O = beta-D-fructose 6-phosphate + NH4(+). It participates in amino-sugar metabolism; N-acetylneuraminate degradation; D-fructose 6-phosphate from N-acetylneuraminate: step 5/5. In terms of biological role, catalyzes the reversible isomerization-deamination of glucosamine 6-phosphate (GlcN6P) to form fructose 6-phosphate (Fru6P) and ammonium ion. This is Glucosamine-6-phosphate deaminase from Cellvibrio japonicus (strain Ueda107) (Pseudomonas fluorescens subsp. cellulosa).